The sequence spans 347 residues: NADH-ubiquinone oxidoreductase chain 2 (347 aa).

Helical transmembrane passes span 3-23 (PPILIAILATVMTGTMIVMLS), 25-45 (HWLLIWIGFEMNMLAIIPILM), 66-86 (ASMLLMMGVTINLLYSGQWMI), 111-131 (FHFWVPEVTQGISLSSGMILL), 149-169 (INTDLMTLVALASVLVGGWGG), 178-198 (IMAYSSIAHMGWMAAIIIYNP), 201-221 (MFLNLSLYILMTLSTFMLFML), 237-257 (IPLIASTILTLMLSLGGLPPL), 274-294 (DMIVVPTLMAITALLNLYFYM), and 325-345 (LLPPLIITSTMLLPIMPMMSI).

Belongs to the complex I subunit 2 family. As to quaternary structure, core subunit of respiratory chain NADH dehydrogenase (Complex I) which is composed of 45 different subunits. Interacts with TMEM242.

The protein resides in the mitochondrion inner membrane. It catalyses the reaction a ubiquinone + NADH + 5 H(+)(in) = a ubiquinol + NAD(+) + 4 H(+)(out). In terms of biological role, core subunit of the mitochondrial membrane respiratory chain NADH dehydrogenase (Complex I) which catalyzes electron transfer from NADH through the respiratory chain, using ubiquinone as an electron acceptor. Essential for the catalytic activity and assembly of complex I. In Vulpes vulpes (Red fox), this protein is NADH-ubiquinone oxidoreductase chain 2.